The following is a 225-amino-acid chain: Uridylate kinase (225 aa).

Residue Asp6 coordinates Mg(2+). ATP is bound at residue 9–10 (GS). Gly44 provides a ligand contact to UMP. Residues Gly45 and Arg49 each contribute to the ATP site. UMP contacts are provided by residues Asp66 and 114–120 (THPGHTT). Mg(2+)-binding residues include Thr120 and Asp121. ATP contacts are provided by Thr140, Asn141, Tyr146, and Asp149. Gly179 provides a ligand contact to UMP. Ser182 lines the Mg(2+) pocket. Residue Ser182 participates in ATP binding.

This sequence belongs to the UMP kinase family. Homohexamer; trimer of dimers.

The protein localises to the cytoplasm. It catalyses the reaction UMP + ATP = UDP + ADP. The protein operates within pyrimidine metabolism; CTP biosynthesis via de novo pathway; UDP from UMP (UMPK route): step 1/1. Inhibited by UTP. In terms of biological role, catalyzes the reversible phosphorylation of UMP to UDP, with ATP as the most efficient phosphate donor. The sequence is that of Uridylate kinase (pyrH) from Pyrococcus furiosus (strain ATCC 43587 / DSM 3638 / JCM 8422 / Vc1).